The following is a 122-amino-acid chain: Large ribosomal subunit protein uL24 (122 aa).

The interval 43–64 (IRKHHRRDMPTPQGGTTKGGII) is disordered.

It belongs to the universal ribosomal protein uL24 family. In terms of assembly, part of the 50S ribosomal subunit.

One of two assembly initiator proteins, it binds directly to the 5'-end of the 23S rRNA, where it nucleates assembly of the 50S subunit. Functionally, one of the proteins that surrounds the polypeptide exit tunnel on the outside of the subunit. The sequence is that of Large ribosomal subunit protein uL24 from Cutibacterium acnes (strain DSM 16379 / KPA171202) (Propionibacterium acnes).